The sequence spans 296 residues: MSTRYIAGSAVALVTPFRKNNTIDTDALKKLVQFHIEAGTDIIIPCGTTGESPTLTSDEQFRIIRIVSEEADGKIMVAAGAGTNATAHAVELAKNAEKAGASAILSVAPYYNKPSQEGFYQHFRHIAEAVSVPIIVYNVPGRTGSNLSASTILRLARDFANIAAVKEASDNMNQIMELLEERPENFSVMTGEDMLILPFMAMGGDGVISVAANQIPSTVKQLVIAAKQGNLDEARALNRKYRRLFKMNFIESNPVPVKYCLSLMGMIEENYRLPLVPLSDENKAVLKKEMEFLGLI.

Threonine 49 serves as a coordination point for pyruvate. Tyrosine 137 (proton donor/acceptor) is an active-site residue. Lysine 166 acts as the Schiff-base intermediate with substrate in catalysis. Isoleucine 208 contacts pyruvate.

This sequence belongs to the DapA family. As to quaternary structure, homotetramer; dimer of dimers.

It localises to the cytoplasm. It catalyses the reaction L-aspartate 4-semialdehyde + pyruvate = (2S,4S)-4-hydroxy-2,3,4,5-tetrahydrodipicolinate + H2O + H(+). The protein operates within amino-acid biosynthesis; L-lysine biosynthesis via DAP pathway; (S)-tetrahydrodipicolinate from L-aspartate: step 3/4. Functionally, catalyzes the condensation of (S)-aspartate-beta-semialdehyde [(S)-ASA] and pyruvate to 4-hydroxy-tetrahydrodipicolinate (HTPA). The sequence is that of 4-hydroxy-tetrahydrodipicolinate synthase from Chlorobium phaeobacteroides (strain DSM 266 / SMG 266 / 2430).